Reading from the N-terminus, the 429-residue chain is Cyclin-B2-3 (429 aa).

Residues 86-101 (ADHKPHIRDEETKKPD) are compositionally biased toward basic and acidic residues. Residues 86–109 (ADHKPHIRDEETKKPDSVSSEEPE) are disordered.

The protein belongs to the cyclin family. Cyclin AB subfamily.

The sequence is that of Cyclin-B2-3 (CYCB2-3) from Arabidopsis thaliana (Mouse-ear cress).